The following is a 231-amino-acid chain: Flagellar L-ring protein (231 aa).

Positions 1 to 18 (MNRFICVLALSGSAVLAG) are cleaved as a signal peptide. C19 carries the N-palmitoyl cysteine lipid modification. The S-diacylglycerol cysteine moiety is linked to residue C19.

This sequence belongs to the FlgH family. The basal body constitutes a major portion of the flagellar organelle and consists of four rings (L,P,S, and M) mounted on a central rod.

It localises to the cell outer membrane. It is found in the bacterial flagellum basal body. In terms of biological role, assembles around the rod to form the L-ring and probably protects the motor/basal body from shearing forces during rotation. This chain is Flagellar L-ring protein, found in Pseudomonas fluorescens (strain ATCC BAA-477 / NRRL B-23932 / Pf-5).